The chain runs to 243 residues: Venom peptide isomerase heavy chain (243 aa).

The Peptidase S1 domain maps to 1-243 (IVGGKTAKFG…YTNWMSKNMV (243 aa)). A disulfide bridge connects residues cysteine 31 and cysteine 47. Residues histidine 46 and aspartate 96 each act as charge relay system in the active site. Asparagine 127 carries N-linked (GlcNAc...) asparagine glycosylation. Cystine bridges form between cysteine 159/cysteine 181 and cysteine 190/cysteine 219. The active-site Charge relay system is the serine 194.

This sequence belongs to the peptidase S1 family. As to quaternary structure, heterodimer with venom peptide isomerase light chain; disulfide-linked. N-linked glycan at Asn-127 consists of Man3-GlcNAc2-Fuc. Expressed by the venom gland.

The protein localises to the secreted. Functionally, peptide isomerase that inverts the chirality at the Ser-81 of omega-Aga IVB. Acts cofactor-independently. The chain is Venom peptide isomerase heavy chain from Agelenopsis aperta (North American funnel-web spider).